Consider the following 228-residue polypeptide: MQKLKQQVFEANMDLPRYGLVTFTWGNVSTIDRERGLVVIKPSGVAYETMKADDMVVVDMSGKVVEGEYRPSSDTATHLELYRRYPSLGGIVHTHSTHATAWAQAGLAIPALGTTHADYFFGDIPCTRGLSEEEVQGEYELNTGKVIIETLGNAEPLHTPGIVVYQHGPFAWGKDAHDAVHNAVVMEEVAKMAWIARGINPQLNHIDSYLMNKHFMRKHGPNAYYGQK.

Substrate is bound by residues glycine 26 to asparagine 27, serine 43 to glycine 44, and serine 72 to serine 73. Residues aspartate 74, histidine 93, and histidine 95 each coordinate Zn(2+). The Proton donor/acceptor role is filled by aspartate 118. Residue histidine 167 participates in Zn(2+) binding. Catalysis depends on tyrosine 225, which acts as the Proton donor/acceptor.

Belongs to the aldolase class II family. AraD/FucA subfamily. It depends on Zn(2+) as a cofactor.

The enzyme catalyses L-ribulose 5-phosphate = D-xylulose 5-phosphate. It participates in cofactor degradation; L-ascorbate degradation; D-xylulose 5-phosphate from L-ascorbate: step 4/4. Its function is as follows. Catalyzes the isomerization of L-ribulose 5-phosphate to D-xylulose 5-phosphate. Is involved in the anaerobic L-ascorbate utilization. The chain is L-ribulose-5-phosphate 4-epimerase UlaF from Escherichia coli O17:K52:H18 (strain UMN026 / ExPEC).